We begin with the raw amino-acid sequence, 871 residues long: Bifunctional cordycepin biosynthesis cluster protein 3 (871 aa).

It functions in the pathway secondary metabolite biosynthesis. Functionally, nucleoside/nucleotide kinase; part of the gene cluster that mediates the biosynthesis of cordycepin (COR) and pentostatin (PTN), two adenosine analogs with related bioactivity profiles as both mimic adenosine and can inhibit some of the processes that are adenosine dependent. Within the pathway, cns3 catalyzes both the first step of cordycepin biosynthesis by phosphorylating adenosine into 3'-AMP via its kinase activity and the conversion of adenosine into pentostatin via its ATP phosphoribosyltransferase activity. The first step of cordycepin biosynthesis involves hydroxyl phosphorylation of the 3'-OH position on adenosine to produce adenosine-3'-monophosphate (3'-AMP), catalyzed by kinase activity of cns3. Next, 3'-AMP is dephosphorylated to 2'-carbonyl-3'-deoxyadenosine (2'-C-3'-dA) by cns2, which is finally converted to cordycepin (3'-deoxyadenosine) by the oxidoreductase cns1. This chain is Bifunctional cordycepin biosynthesis cluster protein 3, found in Cordyceps militaris (strain CM01) (Caterpillar fungus).